The following is a 1304-amino-acid chain: MKNSSVKHTLTPLQQSLFSQLNDIMLVDQRRLSARIHGIGKIKSQEAQQAVAAEIQQQIEQARLRVEQRKSAVQNPIVFPESLPVSQRKVEIQKLISEHQVIVVAGETGSGKTTQLPKMCLELGFGNLGMIGHTQPRRIAARSVAARIAEELETELGGLVGYKVRFNDQISDNTQIKLMTDGILLAEIQNDRFLNQYSCLIIDEAHERSLNNDFILGYLKQLLPRRRRDLKLIITSATIDVERFSKHFNNAPIIEVSGRTYPVEVRYRPVVEEDDQDQLQGILNAVDELQAEGRGDILIFMNGEREIRDTAEALQKQNLKHTEILPLFARLSAQEQNKIFHPSGLNRIVLATNVAETSLTVPSIKYVIDPGTARISRYSYRTKVQRLPIEPISQASANQRKGRCGRVSEGICIRLYSEEDFNSRPEFTDPEILRTNLASVILQMTALGLDDIEAFPFVDAPDERHIQDGVKLLEELGAFETVQTKSGEKRLLTRVGRQLAQLPVDPRLAKMILSAVNFGCVYEMMIIVSALSIQDPRERPQEKQQASDEKHRRFADKKSDFLAFLNLWRYLQEQQKESSKNQFRRQCQKDFLNYLRIREWQDIYHQIRLTVREMSLPINSEKAEYQQIHTALLSGLLSHIGLKEAEKQQYLGARNAHFAIFPNSVLFKKQPKWVMAAELVETSKLWGRMVAEIEPEWIEPLAEHLIKKSYSVPLWSKSRGAVIADEKVTLYGVPIVAVRPVNYGAIDPTVSREIFIQSALVEGGWNTKHKFFKENQRLVREVEELEHKSRRRDILVDDRTLFEFYDQRIGTEVVSQKHFDTWWKKAQQKDPELLNFEHSFLINDDAEQVSKLDFPNFWHQGNLKLKLTYQFEPGTDADGVTVHIPLPLLNQVEMTGFDWQIPGLREELVIALIKSLPKSYRRNFVPAPNYAQAFLSRAVPLEKPLLDTLIYELRRMTGVTVEAEHWNWEQIPSHLKMTFRVVDENGKKIAESMNLDELKFNLKDRVQESISAVADDGIEQSGLHIWSFADLPQCYEQKQRGFSVKAFPAIVDEKDAVGIKLFETEFEQSVAMQQGLRRLLLLNVPSPIKYLHEKLPNKAKLGLYFTPFGRVLDLIDDCIACAVDKLIADFGGFVWDEAGFEKLRDFVRENLNEVTVDIAQKVEQILTLTYQLNQRLKGKMDFTMAFALSDIKSQLAGLVYQGFVQKSGYDRLPDLQRYLQAVDKRIDKLAQDVNRDRAAMLRVEQVQQAYQQLLAKLPKSKPISDEVAEIRYMIEELRVSLFAQQLGTKYQISDKRIGNIISQY.

Residues 93 to 257 (QKLISEHQVI…FNNAPIIEVS (165 aa)) form the Helicase ATP-binding domain. Position 106 to 113 (106 to 113 (GETGSGKT)) interacts with ATP. Positions 203–206 (DEAH) match the DEAH box motif. A Helicase C-terminal domain is found at 281–448 (GILNAVDELQ…SVILQMTALG (168 aa)).

Belongs to the DEAD box helicase family. DEAH subfamily.

The enzyme catalyses ATP + H2O = ADP + phosphate + H(+). This Haemophilus influenzae (strain ATCC 51907 / DSM 11121 / KW20 / Rd) protein is ATP-dependent RNA helicase HrpA homolog (hrpA).